The sequence spans 298 residues: Proton-activated chloride channel (298 aa).

At 1-12 (MPIGFNKACLKN) the chain is on the cytoplasmic side. The helical transmembrane segment at 13–33 (VFTVILVLIYLALTAVAVFLA) threads the bilayer. Topologically, residues 34 to 245 (YQTISDFMDK…RDPFIQQVKD (212 aa)) are extracellular. Residues 246-266 (IVTANPWNTIAILCGVFMALF) traverse the membrane as a helical segment. The Cytoplasmic portion of the chain corresponds to 267–298 (KAADFAKLSIKWMIRIRKRHIRAKMREMNQIS).

This sequence belongs to the proton-activated chloride channel family.

It localises to the cell membrane. It catalyses the reaction chloride(in) = chloride(out). Chloride channel gated by pH that facilitates the entry of chloride ions into cells upon exposure to extracellular acidic pH. Displays channel activity with distinct kinetic properties compared to the human ortholog channel. The polypeptide is Proton-activated chloride channel (Danio rerio (Zebrafish)).